The primary structure comprises 214 residues: uncharacterized protein (214 aa).

The stretch at 39 to 68 (KLRSKKEVEEKIKEVDRELEEVVNAGVSIN) forms a coiled coil. A compositionally biased stretch (basic and acidic residues) spans 99 to 114 (EIKVEAPEPDEEKLPD). A disordered region spans residues 99–162 (EIKVEAPEPD…EEVEFDEEDD (64 aa)). Residues 123–162 (SDLDMDFEDLGQEIPLDADEQEEEEEEEEVEEVEFDEEDD) show a composition bias toward acidic residues. The stretch at 138–212 (LDADEQEEEE…IQRLKVLSGG (75 aa)) forms a coiled coil.

This is an uncharacterized protein from Archaeoglobus fulgidus (strain ATCC 49558 / DSM 4304 / JCM 9628 / NBRC 100126 / VC-16).